A 489-amino-acid polypeptide reads, in one-letter code: 3-octaprenyl-4-hydroxybenzoate carboxy-lyase (489 aa).

Asparagine 172 contributes to the Mn(2+) binding site. Residues 175 to 177 (IYR), 189 to 191 (RWL), and 194 to 195 (RG) each bind prenylated FMN. A Mn(2+)-binding site is contributed by glutamate 238. Aspartate 287 functions as the Proton donor in the catalytic mechanism.

This sequence belongs to the UbiD family. As to quaternary structure, homohexamer. Prenylated FMN is required as a cofactor. Mn(2+) serves as cofactor.

It is found in the cell membrane. The enzyme catalyses a 4-hydroxy-3-(all-trans-polyprenyl)benzoate + H(+) = a 2-(all-trans-polyprenyl)phenol + CO2. Its pathway is cofactor biosynthesis; ubiquinone biosynthesis. Catalyzes the decarboxylation of 3-octaprenyl-4-hydroxy benzoate to 2-octaprenylphenol, an intermediate step in ubiquinone biosynthesis. The sequence is that of 3-octaprenyl-4-hydroxybenzoate carboxy-lyase from Salmonella paratyphi B (strain ATCC BAA-1250 / SPB7).